We begin with the raw amino-acid sequence, 570 residues long: Glutamate--tRNA ligase, chloroplastic/mitochondrial (570 aa).

Residues 1 to 39 (MASLVYGTPWLRVRSLPELAPAFLRRRQSSLFYCSRRSF) constitute a chloroplast and mitochondrion transit peptide. 57–59 (RFA) contacts L-glutamate. Residues 60–70 (PSPTGNLHVGG) carry the 'HIGH' region motif. H67 is an ATP binding site. Residues E93, 245-249 (YNFCV), and R263 each bind L-glutamate. Residues E266 and 301–305 (KLSKR) contribute to the ATP site. The 'KMSKS' region motif lies at 301 to 305 (KLSKR).

It belongs to the class-I aminoacyl-tRNA synthetase family. Glutamate--tRNA ligase type 1 subfamily.

The protein resides in the plastid. It is found in the chloroplast. The protein localises to the mitochondrion. The catalysed reaction is tRNA(Glu) + L-glutamate + ATP = L-glutamyl-tRNA(Glu) + AMP + diphosphate. Functionally, catalyzes the attachment of glutamate to tRNA(Glu) in a two-step reaction: glutamate is first activated by ATP to form Glu-AMP and then transferred to the acceptor end of tRNA(Glu). In Arabidopsis thaliana (Mouse-ear cress), this protein is Glutamate--tRNA ligase, chloroplastic/mitochondrial.